The following is a 354-amino-acid chain: MGCVTSQEDKAAVERSKQIDKSLRMDGEKAAREVKLLLLGAGESGKSTIVKQMKIIHEKGYSQEECLQYKPVVYSNAIQSMIAIIKAMGQLKIQFGHPDRAEDARQFFALAGHADEGEMSAELSGIMKRLWKDVGVQECFSRSREYQLNDSAEYYLNALDRISAPGYIPTEQDVLRTRVKTTGIVETHFTFKDLHFKMFDVGGQRSERKKWIHCFEGVTAIIFIVAMSEYDLTLAEDQEMNRMMESMKLFDSICNNKWFTETSIILFLNKKDLFEEKIKKSPLTICFPEYTGANTYEEAAAYIQLQFENLNKKKDTKEIYSHFTCATDTNNVQFVFDAVTDVIIKNNLKDCGLF.

Gly-2 carries the N-myristoyl glycine lipid modification. A lipid anchor (S-palmitoyl cysteine) is attached at Cys-3. Residues 32–354 (REVKLLLLGA…KNNLKDCGLF (323 aa)) enclose the G-alpha domain. Residues 35-48 (KLLLLGAGESGKST) are G1 motif. Residues 40 to 47 (GAGESGKS), 175 to 181 (LRTRVKT), 200 to 204 (DVGGQ), 269 to 272 (NKKD), and Ala-326 contribute to the GTP site. 2 residues coordinate Mg(2+): Ser-47 and Thr-181. Positions 173–181 (DVLRTRVKT) are G2 motif. A G3 motif region spans residues 196–205 (FKMFDVGGQR). A G4 motif region spans residues 265-272 (ILFLNKKD). Residues 324-329 (TCATDT) are G5 motif.

The protein belongs to the G-alpha family. G(i/o/t/z) subfamily. G proteins are composed of 3 units; alpha, beta and gamma. The alpha chain contains the guanine nucleotide binding site.

Its function is as follows. Guanine nucleotide-binding proteins (G proteins) are involved as modulators or transducers in various transmembrane signaling systems. The G(i) proteins are involved in hormonal regulation of adenylate cyclase: they inhibit the cyclase in response to beta-adrenergic stimuli. This Lymnaea stagnalis (Great pond snail) protein is Guanine nucleotide-binding protein G(i) subunit alpha.